The following is a 73-amino-acid chain: Beta-defensin 10 (73 aa).

A signal peptide spans 1 to 23 (MRTLCSLLLICCLLFSYTTPAVG). 3 disulfides stabilise this stretch: C37–C66, C44–C59, and C49–C67.

The protein belongs to the beta-defensin family. As to expression, expressed in both adult and neonate brain, and very weakly in kidneys, epididymis, and testis.

The protein resides in the secreted. Functionally, has antibacterial activity. The sequence is that of Beta-defensin 10 (Defb10) from Mus musculus (Mouse).